The primary structure comprises 277 residues: 3-methyl-2-oxobutanoate hydroxymethyltransferase (277 aa).

Mg(2+)-binding residues include Asp-53 and Asp-96. 3-methyl-2-oxobutanoate-binding positions include 53–54, Asp-96, and Lys-126; that span reads DS. Glu-128 contributes to the Mg(2+) binding site. Glu-195 acts as the Proton acceptor in catalysis.

The protein belongs to the PanB family. Homodecamer; pentamer of dimers. Requires Mg(2+) as cofactor.

The protein resides in the cytoplasm. The enzyme catalyses 3-methyl-2-oxobutanoate + (6R)-5,10-methylene-5,6,7,8-tetrahydrofolate + H2O = 2-dehydropantoate + (6S)-5,6,7,8-tetrahydrofolate. Its pathway is cofactor biosynthesis; (R)-pantothenate biosynthesis; (R)-pantoate from 3-methyl-2-oxobutanoate: step 1/2. Its function is as follows. Catalyzes the reversible reaction in which hydroxymethyl group from 5,10-methylenetetrahydrofolate is transferred onto alpha-ketoisovalerate to form ketopantoate. This Chlorobium luteolum (strain DSM 273 / BCRC 81028 / 2530) (Pelodictyon luteolum) protein is 3-methyl-2-oxobutanoate hydroxymethyltransferase.